The sequence spans 365 residues: Patr class I histocompatibility antigen, A-2 alpha chain (365 aa).

The N-terminal stretch at 1-24 (MAVMPPRTLLLLLSGALALTQTWA) is a signal peptide. Positions 25 to 114 (GSHSMRYFFT…LRGYYNQSED (90 aa)) are alpha-1. The Extracellular segment spans residues 25 to 308 (GSHSMRYFFT…EPSSQPTIPI (284 aa)). N-linked (GlcNAc...) asparagine glycosylation is present at asparagine 110. Positions 115–206 (GSHTIQIMYG…ENGKETLQRT (92 aa)) are alpha-2. Disulfide bonds link cysteine 125-cysteine 188 and cysteine 227-cysteine 283. The segment at 207–298 (DPPKTHMTHH…GLPKPLTLRW (92 aa)) is alpha-3. One can recognise an Ig-like C1-type domain in the interval 209–295 (PKTHMTHHPI…QHEGLPKPLT (87 aa)). Residues 299-308 (EPSSQPTIPI) are connecting peptide. Residues 309–332 (VGIIAGLVLLGAVITGAVVAAVMW) traverse the membrane as a helical segment. The Cytoplasmic segment spans residues 333 to 365 (RRKSSDRKGGSYTQAASSDSAQGSDVSLTACKV). The segment at 339 to 360 (RKGGSYTQAASSDSAQGSDVSL) is disordered. Residue serine 343 is modified to Phosphoserine. At tyrosine 344 the chain carries Phosphotyrosine. The segment covering 346–359 (QAASSDSAQGSDVS) has biased composition (low complexity). Serine 349, serine 350, serine 352, serine 356, and serine 359 each carry phosphoserine.

The protein belongs to the MHC class I family. In terms of assembly, heterodimer of an alpha chain and a beta chain (beta-2-microglobulin).

The protein localises to the membrane. Involved in the presentation of foreign antigens to the immune system. The polypeptide is Patr class I histocompatibility antigen, A-2 alpha chain (Pan troglodytes (Chimpanzee)).